A 375-amino-acid chain; its full sequence is METPDETTVRAADSCRESLPERVDGGRVLFGFDGYIDRVREFVSERQSADTYERVPTLDAFAERVNDSVEAESSLTFEWIQDGVRTGGHVSHLARAFDRMGFEPGVVGCLGDPVEEPFVEEFGHLPLETLGSPGYTDAVEFGDGKLMLTEIGALMTLDWAGIESRVGLDRLAELVDGAELVGMGYWSEMPELPDVARGLREELWPTLSDPPETLLLDPGDLRKRGPDVVAAGVEQVSALDDAVRVVVSANRYETRYLARLAGVESDDFGRESQAAFDHLGVSRFAGHGIEEAHLVDEAGTATVGVPRTDDPVLTTSSGDHFNAGLALAHVLDLGRAESLVVGNAVAGHFVRTGSPPTYDELRAFASGYLDYFDAA.

Aspartate 319 contributes to the beta-D-fructose binding site.

Belongs to the carbohydrate kinase PfkB family. Homodimer.

It catalyses the reaction beta-D-fructose + ATP = beta-D-fructose 1-phosphate + ADP + H(+). It functions in the pathway carbohydrate metabolism; fructose metabolism. Activated in the presence of 0.5 M KCl. 85% activity at 3.5 M KCl. 60% activity without KCl. Functionally, catalyzes the ATP-dependent phosphorylation of the ketose sugar fructose to fructose-1-phosphate. Does not produce fructose-6-phosphate. The sugars D-glucose, D-galactose, L-rhamnose, D-xylose, L-arabinose and D-ribose are not substrates of this enzyme. The polypeptide is Ketohexokinase (Haloferax volcanii (strain ATCC 29605 / DSM 3757 / JCM 8879 / NBRC 14742 / NCIMB 2012 / VKM B-1768 / DS2) (Halobacterium volcanii)).